A 196-amino-acid chain; its full sequence is ATP-dependent Clp protease proteolytic subunit (196 aa).

The active-site Nucleophile is the Ser-98. Residue His-123 is part of the active site.

This sequence belongs to the peptidase S14 family. In terms of assembly, fourteen ClpP subunits assemble into 2 heptameric rings which stack back to back to give a disk-like structure with a central cavity, resembling the structure of eukaryotic proteasomes.

It is found in the cytoplasm. It carries out the reaction Hydrolysis of proteins to small peptides in the presence of ATP and magnesium. alpha-casein is the usual test substrate. In the absence of ATP, only oligopeptides shorter than five residues are hydrolyzed (such as succinyl-Leu-Tyr-|-NHMec, and Leu-Tyr-Leu-|-Tyr-Trp, in which cleavage of the -Tyr-|-Leu- and -Tyr-|-Trp bonds also occurs).. Its function is as follows. Cleaves peptides in various proteins in a process that requires ATP hydrolysis. Has a chymotrypsin-like activity. Plays a major role in the degradation of misfolded proteins. This Geobacillus thermodenitrificans (strain NG80-2) protein is ATP-dependent Clp protease proteolytic subunit.